A 1310-amino-acid chain; its full sequence is Major viral transcription factor ICP4 homolog (1310 aa).

3 disordered regions span residues 117–271, 285–454, and 636–696; these read AGAR…GPVE, GAKA…TPII, and GSSP…SLLD. Over residues 341–350 the composition is skewed to basic and acidic residues; it reads PVEKKPKSRE. Composition is skewed to low complexity over residues 351 to 364, 392 to 407, and 648 to 666; these read FVSSSSSSSSWGSS, PSPSNSDDSDSNDGGS, and PSPTTPATQTPDPQPSAAA. The Nuclear localization signal motif lies at 677-685; that stretch reads RLRTPRKRK. Phosphoserine; by VZV ORF66 occurs at positions 686 and 722. 2 disordered regions span residues 1195 to 1258 and 1282 to 1310; these read RFVF…SFGV and ELLSSSSSSEDEDDVWGGRGGRSPPQSRG. Positions 1217–1227 are enriched in basic and acidic residues; it reads RTADDREHALE. Over residues 1228-1250 the composition is skewed to acidic residues; that stretch reads PDDWEVGCEDAWDSEEGGGDDGD.

The protein belongs to the herpesviridae ICP4 family. As to quaternary structure, interacts with IE4 and IE63. Interacts with human USF1 and SP1. Phosphorylated by ORF66 protein kinase on Ser-686 and Ser-722. Also phosphorylated by ORF47 protein kinase and by human CSNK2A1/CKII.

The protein localises to the host nucleus. Its subcellular location is the host cytoplasm. It localises to the virion tegument. Its function is as follows. Transcriptional transactivator. May interact with and recruit specific components of the general transcription machinery to viral promoters and stabilize their formation for transcription initiation. Negatively regulates its own transcription. This immediate early (EI) protein may be necessary in virion for viral pathogenesis. This chain is Major viral transcription factor ICP4 homolog, found in Homo sapiens (Human).